Reading from the N-terminus, the 82-residue chain is Zinc finger CCCH domain-containing protein 13 (82 aa).

2 C3H1-type zinc fingers span residues 9–37 (RPGE…HPKN) and 55–82 (RPGQ…DHFT).

This chain is Zinc finger CCCH domain-containing protein 13, found in Arabidopsis thaliana (Mouse-ear cress).